Consider the following 1158-residue polypeptide: ATP-dependent helicase/deoxyribonuclease subunit B (1158 aa).

The region spanning 1 to 275 (MTLHAYLGRA…QYFNQLYRFN (275 aa)) is the UvrD-like helicase ATP-binding domain. 8-15 (GRAGTGKS) lines the ATP pocket. Residues 269 to 583 (NQLYRFNNQD…SIGTMDLAKV (315 aa)) form the UvrD-like helicase C-terminal domain. Cys-784, Cys-1112, Cys-1115, and Cys-1121 together coordinate [4Fe-4S] cluster.

The protein belongs to the helicase family. AddB/RexB type 1 subfamily. Heterodimer of AddA and AddB. Mg(2+) serves as cofactor. [4Fe-4S] cluster is required as a cofactor.

Its function is as follows. The heterodimer acts as both an ATP-dependent DNA helicase and an ATP-dependent, dual-direction single-stranded exonuclease. Recognizes the chi site generating a DNA molecule suitable for the initiation of homologous recombination. The AddB subunit has 5' -&gt; 3' nuclease activity but not helicase activity. In Staphylococcus aureus (strain COL), this protein is ATP-dependent helicase/deoxyribonuclease subunit B.